Consider the following 177-residue polypeptide: Nucleoside triphosphate/diphosphate phosphatase (177 aa).

R23 (proton donor) is an active-site residue. Mg(2+)-binding residues include N87, D103, D105, D107, D120, and E123.

It belongs to the Ntdp family. Mg(2+) is required as a cofactor.

The catalysed reaction is a ribonucleoside 5'-triphosphate + H2O = a ribonucleoside 5'-diphosphate + phosphate + H(+). It carries out the reaction a ribonucleoside 5'-diphosphate + H2O = a ribonucleoside 5'-phosphate + phosphate + H(+). Its function is as follows. Has nucleoside phosphatase activity towards nucleoside triphosphates and nucleoside diphosphates. In Streptococcus thermophilus (strain CNRZ 1066), this protein is Nucleoside triphosphate/diphosphate phosphatase.